The chain runs to 379 residues: MDNLANQGVIVLAAGGTGGHLFPAEALAHELRARGWDVHLATDARAQRFVGAFAQDHVHVIRSATIAGRNPVALLKTFWSLWQGNLDSRKLFRRLKPKLVVGFGGYPTLPPLYAASNMGIPTLIHEQNAVMGRANKGLAGRVKAIAGGFLPENSGAYAAKTVITGNPVRSPVLVAAATPYTPAGKDDRFRLLVFGGSQGAQFFSQAIPAAVALLPEHERARLLITQQARKEDEASARQAYEKLGVPADVAPFFNDMPARMADAHFVIARSGASTVSEITVIGRPAMLVPFPHALDHDQAANAAALAAAGGAEVVRQADLSPQRLAEMLQSAMNEPERLEQQAKAAKSVGKPDAARLLADLAEAIASGKTVQEFKEGNRP.

UDP-N-acetyl-alpha-D-glucosamine-binding positions include 17–19 (TGG), N128, R169, S197, and Q298.

Belongs to the glycosyltransferase 28 family. MurG subfamily.

The protein resides in the cell inner membrane. The enzyme catalyses di-trans,octa-cis-undecaprenyl diphospho-N-acetyl-alpha-D-muramoyl-L-alanyl-D-glutamyl-meso-2,6-diaminopimeloyl-D-alanyl-D-alanine + UDP-N-acetyl-alpha-D-glucosamine = di-trans,octa-cis-undecaprenyl diphospho-[N-acetyl-alpha-D-glucosaminyl-(1-&gt;4)]-N-acetyl-alpha-D-muramoyl-L-alanyl-D-glutamyl-meso-2,6-diaminopimeloyl-D-alanyl-D-alanine + UDP + H(+). Its pathway is cell wall biogenesis; peptidoglycan biosynthesis. Its function is as follows. Cell wall formation. Catalyzes the transfer of a GlcNAc subunit on undecaprenyl-pyrophosphoryl-MurNAc-pentapeptide (lipid intermediate I) to form undecaprenyl-pyrophosphoryl-MurNAc-(pentapeptide)GlcNAc (lipid intermediate II). This chain is UDP-N-acetylglucosamine--N-acetylmuramyl-(pentapeptide) pyrophosphoryl-undecaprenol N-acetylglucosamine transferase, found in Brucella abortus (strain S19).